A 106-amino-acid polypeptide reads, in one-letter code: MNHNVYLLTSFNLWSHGVYKISSISLSNSFFPHSFMFVKSLHLMTSQHIFKCLSSCNYALSILHNICLASFLYLSKCYYHTHILTSVRLDFCKSHAHTYIKSKAST.

This is an uncharacterized protein from Schizosaccharomyces pombe (strain 972 / ATCC 24843) (Fission yeast).